The primary structure comprises 279 residues: Protoheme IX farnesyltransferase (279 aa).

Transmembrane regions (helical) follow at residues 5–25 (LILL…AGYL), 33–53 (IAQA…AAAF), 84–103 (LAYS…LLLG), 108–125 (LFVF…TVIL), 133–153 (ILGG…LGAG), 159–179 (AVLI…ALAY), 201–221 (AAVA…MTLY), 222–242 (LAFG…VATI), and 256–276 (AMWK…LALI).

It belongs to the UbiA prenyltransferase family. Protoheme IX farnesyltransferase subfamily.

It is found in the cell membrane. The catalysed reaction is heme b + (2E,6E)-farnesyl diphosphate + H2O = Fe(II)-heme o + diphosphate. Its pathway is porphyrin-containing compound metabolism; heme O biosynthesis; heme O from protoheme: step 1/1. Converts heme B (protoheme IX) to heme O by substitution of the vinyl group on carbon 2 of heme B porphyrin ring with a hydroxyethyl farnesyl side group. The protein is Protoheme IX farnesyltransferase of Pyrobaculum arsenaticum (strain DSM 13514 / JCM 11321 / PZ6).